Consider the following 530-residue polypeptide: MNNARPIRRALISVSDKTGIVEFAQALAERGVDILSTGGTARLLAEQGIAVTEVSDYTGFPEMMDGRVKTLHPKVHGGVLGRRGQDDDVMEKHGINPIDMVVVNLYPFAETVAKEGCTLADAVENIDIGGPTMVRSAAKNHKDVTIVVNAHDYNRVIAEMDANDKSLTLETRFDLAIAAFEHTASYDGMIANYFGTMVPSYGENKEGDEESKFPRTFNQQFEKKQDMRYGENSHQAAAFYVEANPQEASVSTARQIQGKALSYNNIADTDAALECVKEFNEPACVIVKHANPCGVALGKDILEAYNRAYQTDPTSAFGGIIAFNQELDAETATAIVERQFIEVIIAPSVSAEAIEVVAAKKNVRLLECGEWTTKTTGFDVKRVNGGLLVQDRDQGMVSLGDLKVVSKRQPTEEELKDALFCWKVAKYVKSNAIVYAKGDMTIGVGAGQMSRVYSAKIAGIKAADEGLEVAGSVMASDAFFPFRDGIDAAAEAGIKCVIQPGGSMRDDEVIAAADEHGMAMIFTGMRHFRH.

An MGS-like domain is found at 1–148; sequence MNNARPIRRA…KNHKDVTIVV (148 aa).

This sequence belongs to the PurH family.

The enzyme catalyses (6R)-10-formyltetrahydrofolate + 5-amino-1-(5-phospho-beta-D-ribosyl)imidazole-4-carboxamide = 5-formamido-1-(5-phospho-D-ribosyl)imidazole-4-carboxamide + (6S)-5,6,7,8-tetrahydrofolate. The catalysed reaction is IMP + H2O = 5-formamido-1-(5-phospho-D-ribosyl)imidazole-4-carboxamide. It functions in the pathway purine metabolism; IMP biosynthesis via de novo pathway; 5-formamido-1-(5-phospho-D-ribosyl)imidazole-4-carboxamide from 5-amino-1-(5-phospho-D-ribosyl)imidazole-4-carboxamide (10-formyl THF route): step 1/1. Its pathway is purine metabolism; IMP biosynthesis via de novo pathway; IMP from 5-formamido-1-(5-phospho-D-ribosyl)imidazole-4-carboxamide: step 1/1. This chain is Bifunctional purine biosynthesis protein PurH, found in Vibrio campbellii (strain ATCC BAA-1116).